The chain runs to 111 residues: Large ribosomal subunit protein uL22 (111 aa).

This sequence belongs to the universal ribosomal protein uL22 family. As to quaternary structure, part of the 50S ribosomal subunit.

This protein binds specifically to 23S rRNA; its binding is stimulated by other ribosomal proteins, e.g. L4, L17, and L20. It is important during the early stages of 50S assembly. It makes multiple contacts with different domains of the 23S rRNA in the assembled 50S subunit and ribosome. Its function is as follows. The globular domain of the protein is located near the polypeptide exit tunnel on the outside of the subunit, while an extended beta-hairpin is found that lines the wall of the exit tunnel in the center of the 70S ribosome. The protein is Large ribosomal subunit protein uL22 of Mycoplasma mycoides subsp. mycoides SC (strain CCUG 32753 / NCTC 10114 / PG1).